A 539-amino-acid chain; its full sequence is MVVNLCLPQFRPRIHCNKVSADGYEVENLISEDLIKRSHGFRTEYFIRPPIYVTVSFPFNVEICRVNIDLTTGGYQNVSGLELYTSALSSRVSQDAQDCWTTGPVETSVPDKEAFTLVGKVLLKNQNHVVFSHRGFKARPPFSPMEVTLLSPAVVAQELWNKGALSLSHVAHLKIGITHVTGSGISCIKRLEVWGQPARTCSQEVINSVLLIASESLPQDLDLHAPALPMESDCDPGGQSESQHSPCTLQDMSEVESDVPEEFLDPITLEIMPCPMLLPSGKVIDQSTLEKCNLSEAAWGRVPSDPFTGLAFTPQSQPLPHPSLKARIDRFLLQHSISGCRLLGRAQTPSAMTPSVITLPSRKRKTEQAEHSSHYSLGMSASSSATSPLFSPTTSEPTAKKMKATSELGLTDMDCSAGPVSHEQKLAQSLEIALTSTLGSMPSFTARLTKGQLQLGTRGSSACRRPASSSEHPRSVSGPECASCKQAFSSYSTNEPVYQLPCGHLLCRPCLSEKQRSQPMMCTACRQPVTSQDVLRVHF.

The disordered stretch occupies residues 226–249 (PALPMESDCDPGGQSESQHSPCTL). Polar residues predominate over residues 239-249 (QSESQHSPCTL). In terms of domain architecture, U-box spans 258-338 (DVPEEFLDPI…DRFLLQHSIS (81 aa)). 2 disordered regions span residues 359–399 (LPSR…EPTA) and 456–479 (GTRG…VSGP). A compositionally biased stretch (low complexity) spans 374–395 (HYSLGMSASSSATSPLFSPTTS). Residues 481 to 526 (CASCKQAFSSYSTNEPVYQLPCGHLLCRPCLSEKQRSQPMMCTACR) form an RING-type zinc finger.

As to quaternary structure, interacts with UBE2L3. Interacts with VCP. Expressed in testis and placenta.

Its subcellular location is the nucleus. It catalyses the reaction S-ubiquitinyl-[E2 ubiquitin-conjugating enzyme]-L-cysteine + [acceptor protein]-L-lysine = [E2 ubiquitin-conjugating enzyme]-L-cysteine + N(6)-ubiquitinyl-[acceptor protein]-L-lysine.. It functions in the pathway protein modification; protein ubiquitination. In terms of biological role, may have a ubiquitin-protein ligase activity acting as an E3 ubiquitin-protein ligase or as a ubiquitin-ubiquitin ligase promoting elongation of ubiquitin chains on substrates. The sequence is that of RING finger protein 37 (Ubox5) from Mus musculus (Mouse).